Reading from the N-terminus, the 403-residue chain is Acetylornithine aminotransferase (403 aa).

Residues 107-108 (GA) and Phe-140 contribute to the pyridoxal 5'-phosphate site. A N(2)-acetyl-L-ornithine-binding site is contributed by Arg-143. 225 to 228 (DEVQ) is a binding site for pyridoxal 5'-phosphate. An N6-(pyridoxal phosphate)lysine modification is found at Lys-254. Ser-282 is a binding site for N(2)-acetyl-L-ornithine. Thr-283 provides a ligand contact to pyridoxal 5'-phosphate.

The protein belongs to the class-III pyridoxal-phosphate-dependent aminotransferase family. ArgD subfamily. In terms of assembly, homodimer. Pyridoxal 5'-phosphate serves as cofactor.

Its subcellular location is the cytoplasm. It catalyses the reaction N(2)-acetyl-L-ornithine + 2-oxoglutarate = N-acetyl-L-glutamate 5-semialdehyde + L-glutamate. It functions in the pathway amino-acid biosynthesis; L-arginine biosynthesis; N(2)-acetyl-L-ornithine from L-glutamate: step 4/4. The polypeptide is Acetylornithine aminotransferase (Vibrio parahaemolyticus serotype O3:K6 (strain RIMD 2210633)).